A 131-amino-acid chain; its full sequence is Profilin-6 (131 aa).

Cys-13 and Cys-115 are joined by a disulfide. An Involved in PIP2 interaction motif is present at residues 81–97 (VVIRGKKGAGGITIKKT). At Thr-111 the chain carries Phosphothreonine.

Belongs to the profilin family. In terms of assembly, occurs in many kinds of cells as a complex with monomeric actin in a 1:1 ratio. Post-translationally, phosphorylated by MAP kinases.

The protein localises to the cytoplasm. It is found in the cytoskeleton. Binds to actin and affects the structure of the cytoskeleton. At high concentrations, profilin prevents the polymerization of actin, whereas it enhances it at low concentrations. The protein is Profilin-6 of Corylus avellana (European hazel).